Consider the following 489-residue polypeptide: Threonine/serine exporter (489 aa).

The next 10 helical transmembrane spans lie at 151–171, 174–194, 206–226, 233–253, 268–288, 314–334, 335–355, 356–376, 381–401, and 420–440; these read GFPVALLGWAMMGGAVAVLLG, WQVSLIAFITAFTIIATTSFL, VVGGFIATLPASIAYSLALQF, SQIIASGIVVLLAGLTLVQSL, FFETLLFTGGIVAGVGLGIQL, IIAGGVTAAAFAVGCYAEWSS, VIIAGLTALMGSAFYYLFVVY, LGPVSAAAIAATAVGFTGGLL, LIPPLIVAIAGITPMLPGLAI, and IAVALATASSLAAGVVLGEWI. Residues 464–489 form a disordered region; sequence FQEEAEQNQRRQRKRPKTNQRFGNKR. Positions 473 to 489 are enriched in basic residues; that stretch reads RRQRKRPKTNQRFGNKR.

It belongs to the ThrE exporter (TC 2.A.79) family.

It localises to the cell membrane. It catalyses the reaction L-threonine(in) + H(+)(out) = L-threonine(out) + H(+)(in). With respect to regulation, transport is inhibited by the proton ionophore carbonyl cyanide m-chlorophenylhydrazone (CCCP). Its function is as follows. Catalyzes the export of L-threonine and L-serine from the cell to the extracellular environment. Export is dependent on the proton motive force. The sequence is that of Threonine/serine exporter from Corynebacterium glutamicum (Brevibacterium saccharolyticum).